Consider the following 196-residue polypeptide: Calcium channel flower (196 aa).

3 consecutive transmembrane segments (helical) span residues L36 to I56, I67 to E89, and A114 to F134.

The protein belongs to the calcium channel flower family. As to quaternary structure, homomultimer. Associates with the dally/ magu complex.

It is found in the cell membrane. The protein resides in the cytoplasmic vesicle. It localises to the secretory vesicle. The protein localises to the synaptic vesicle membrane. Its subcellular location is the presynaptic cell membrane. It is found in the endosome. Its activity is regulated as follows. Channel activity is inhibited by La(3+), which reduces Ca(2+) influx and thus inhibits it's function in promoting activity-dependent bulk endocytosis (ADBE) in response to high stimuli. Functionally, transmembrane protein which mediates synaptic endocytosis, fitness-based cell culling, neuronal culling, morphogen gradient scaling, and calcium transport. Regulates synaptic endocytosis and hence couples exo- with endocytosis. Controls two major modes of synaptic vesicle (SV) endocytosis in the synaptic boutons of neuromuscular junctions (NMJs); Ca(2+) channel-independent Clathrin-mediated endocytosis (CME) in response to mild stimulation, and Ca(2+) channel-dependent activity-dependent bulk endocytosis (ADBE) in response to strong stimulation. Functions in ADBE and subsequent SV reformation from bulk endosomes by initiating Ca(2+) channel-dependent phosphatidylinositol 4,5-bisphosphate (PtdIns(4,5)P2) compartmentalization in synaptic boutons. There it acts at the periactive zone to provide the low Ca(2+) levels required to initiate Calcineurin activation and upregulate PtdIns(4,5)P2. Conversely PtdIns(4,5)P2 enhances fwe Ca(2+) channel-activity, establishing a positive feedback loop that induces PtdIns(4,5)P2 microdomain at the periactive zone. These microdomains trigger bulk membrane invagination (i.e. ADBE) by triggering actin polymerization while also promoting localization of fwe to bulk endosomes, thereby removing the ADBE trigger to reduce endocytosis and prevent excess membrane uptake. PtdIns(4,5)P2 then promotes SV reformation from the bulk endosomes, to coordinate ADBE and subsequent SV reformation. Different combinations of the flower isoforms at the cell membrane are also required for the identification and elimination of suboptimal or supernumerary cells during development, regeneration, and adulthood. Required for the recognition and elimination of unfit cells in the developing wing during cell competition. In the developing pupal retina, mediates the elimination of unwanted postmitotic neurons, including supernumerary photoreceptor neurons that form at the periphery of the retina and are contained within incomplete ommatidia units. Also required for efficient elimination and replacement of old neurons by newly generated neurons during regeneration in the adult brain following mechanical injury. Downstream of the flower fitness fingerprints, cells identified as unwanted or unfit are eliminated via apoptosis through the expression of ahuizotl (azot). However, the cells marked for elimination by the flower isoforms only undergo apoptosis if additional thresholds are met; (1) their neighboring fit/healthy cells express different levels of the fwe isoforms, and (2) the levels of the protective signal SPARC expressed by the loser or unwanted cells are unable to inhibit caspase activation. These additional thresholds for flower-mediated apoptosis, allows useful cells to recover from transient and limited stress before they are unnecessarily eliminated. Functions with dally and magu in a mechanism of scaling, which utilises apoptosis to ensure that the dpp morphogen gradient, which mediates organ growth, remains proportional to the size of the growing wing. In this mechanism, fwe represses dally- and Magu-dependent activity in expanding the gradient, and dally/Magu inhibits fwe-dependent apoptosis to keep cell death rate low. When the levels of these different proteins are optimally regulated the gradient correctly scales with organ growth but when this fails, fwe-mediated apoptosis is activated to trim the developing tissue to match the correct size of the gradient. This Drosophila virilis (Fruit fly) protein is Calcium channel flower.